A 317-amino-acid chain; its full sequence is Ornithine carbamoyltransferase (317 aa).

Residues 54 to 57, Q81, R105, and 132 to 135 contribute to the carbamoyl phosphate site; these read STRT and HPCQ. L-ornithine-binding positions include N163, D227, and 231–232; that span reads SM. Residues 267-268 and R295 each bind carbamoyl phosphate; that span reads CL.

The protein belongs to the aspartate/ornithine carbamoyltransferase superfamily. OTCase family.

The protein localises to the cytoplasm. The catalysed reaction is carbamoyl phosphate + L-ornithine = L-citrulline + phosphate + H(+). Its pathway is amino-acid biosynthesis; L-arginine biosynthesis; L-arginine from L-ornithine and carbamoyl phosphate: step 1/3. Reversibly catalyzes the transfer of the carbamoyl group from carbamoyl phosphate (CP) to the N(epsilon) atom of ornithine (ORN) to produce L-citrulline. The polypeptide is Ornithine carbamoyltransferase (Parafrankia sp. (strain EAN1pec)).